Reading from the N-terminus, the 442-residue chain is UDP-glycosyltransferase 79B8 (442 aa).

Residues Ser-260, 319–321 (VQQ), 336–344 (HCGPGTIWE), and 358–361 (LGDQ) each bind UDP-alpha-D-glucose.

It belongs to the UDP-glycosyltransferase family.

The chain is UDP-glycosyltransferase 79B8 (UGT79B8) from Arabidopsis thaliana (Mouse-ear cress).